The primary structure comprises 525 residues: Nucleolar and spindle-associated protein 1-A (525 aa).

4 disordered regions span residues 46-205, 248-292, 373-397, and 451-525; these read ESKD…LHEA, EKTP…RFSA, TPES…PEKA, and SLSR…VPVQ. Polar residues predominate over residues 58–69; sequence SSLTDTDELNSS. Positions 82–92 are enriched in basic residues; it reads THRRGRGRKPL. Polar residues predominate over residues 106–127; that stretch reads SVGTGTESLASETDNTQDQNCL. Residues 160–169 show a composition bias toward basic and acidic residues; sequence TTEKRQKKAS. The span at 270 to 285 shows a compositional bias: polar residues; sequence PPTTGASPSRTPTNQR. Over residues 476–494 the composition is skewed to polar residues; that stretch reads CGSNNNVSVLKNNFKQPHL. Residues 495 to 514 show a composition bias toward basic and acidic residues; the sequence is QTREDRRKQHEQDRKGKRDQ.

It belongs to the NUSAP family. As to quaternary structure, interacts with DNA. Interacts with microtubules, ipo7, kpna2 and kpnb1. Microtubule stabilization is inhibited by ipo7 and kpna2, while microtubule bundling is inhibited by kpnb1. Active GTP-bound ran causes dissociation of ipo7 and kpnb1.

The protein resides in the cytoplasm. The protein localises to the nucleus. Its subcellular location is the cytoskeleton. It is found in the spindle. Functionally, microtubule-associated protein with the capacity to bundle and stabilize microtubules. May associate with chromosomes and promote the organization of meiotic or mitotic spindle microtubules around them. This is Nucleolar and spindle-associated protein 1-A (nusap1-a) from Xenopus laevis (African clawed frog).